The primary structure comprises 414 residues: Inositol-tetrakisphosphate 1-kinase (414 aa).

Lys-18 provides a ligand contact to 1D-myo-inositol 1,3,4-trisphosphate. 2 residues coordinate ATP: Arg-106 and Lys-157. One can recognise an ATP-grasp domain in the interval Glu-117–Thr-325. The 1D-myo-inositol 1,3,4-trisphosphate site is built by His-167 and Lys-199. ATP is bound by residues Gln-188 to Lys-199, Ser-214, Ser-232, and Ser-236. The Mg(2+) site is built by Asp-281, Asp-295, and Asn-297. Position 297 (Asn-297) interacts with 1D-myo-inositol 1,3,4-trisphosphate. 2 positions are modified to N6-acetyllysine; by EP300 and CREBBP: Lys-340 and Lys-383. At Ser-396 the chain carries Phosphoserine. Residue Lys-410 is modified to N6-acetyllysine; by EP300 and CREBBP.

Belongs to the ITPK1 family. As to quaternary structure, monomer. Interacts with GPS1/COPS1. Requires Mg(2+) as cofactor. Post-translationally, acetylation by EP300 and CREBBP destabilizes ITPK1, and down-regulates enzymatic activity. Deacetylated by SIRT1. As to expression, expressed in brain &gt; heart &gt; skeletal muscle = kidney = pancreas = liver = placenta &gt; lung. In brain, it is expressed in cerebellum, cerebral cortex, medulla, spinal cord, occipital lobe, frontal lobe, temporal lobe and putamen.

The catalysed reaction is 1D-myo-inositol 3,4,5,6-tetrakisphosphate + ATP = 1D-myo-inositol 1,3,4,5,6-pentakisphosphate + ADP + H(+). It catalyses the reaction 1D-myo-inositol 1,3,4-trisphosphate + ATP = 1D-myo-inositol 1,3,4,5-tetrakisphosphate + ADP + H(+). It carries out the reaction 1D-myo-inositol 1,3,4-trisphosphate + ATP = 1D-myo-inositol 1,3,4,6-tetrakisphosphate + ADP + H(+). The enzyme catalyses 1D-myo-inositol 3,4,6-trisphosphate + ATP = 1D-myo-inositol 1,3,4,6-tetrakisphosphate + ADP + H(+). The catalysed reaction is 1D-myo-inositol 1,3,4-trisphosphate + 1D-myo-inositol 1,3,4,5,6-pentakisphosphate = 1D-myo-inositol 3,4,5,6-tetrakisphosphate + 1D-myo-inositol 1,3,4,6-tetrakisphosphate. It catalyses the reaction 1D-myo-inositol 1,3,4-trisphosphate + 1D-myo-inositol 1,3,4,5,6-pentakisphosphate = 1D-myo-inositol 3,4,5,6-tetrakisphosphate + 1D-myo-inositol 1,3,4,5-tetrakisphosphate. In terms of biological role, kinase that can phosphorylate various inositol polyphosphate such as Ins(3,4,5,6)P4 or Ins(1,3,4)P3. Phosphorylates Ins(3,4,5,6)P4 at position 1 to form Ins(1,3,4,5,6)P5. This reaction is thought to have regulatory importance, since Ins(3,4,5,6)P4 is an inhibitor of plasma membrane Ca(2+)-activated Cl(-) channels, while Ins(1,3,4,5,6)P5 is not. Also phosphorylates Ins(1,3,4)P3 on O-5 and O-6 to form Ins(1,3,4,6)P4, an essential molecule in the hexakisphosphate (InsP6) pathway. Also acts as an inositol polyphosphate phosphatase that dephosphorylates Ins(1,3,4,5)P4 and Ins(1,3,4,6)P4 to Ins(1,3,4)P3, and Ins(1,3,4,5,6)P5 to Ins(3,4,5,6)P4. May also act as an isomerase that interconverts the inositol tetrakisphosphate isomers Ins(1,3,4,5)P4 and Ins(1,3,4,6)P4 in the presence of ADP and magnesium. Probably acts as the rate-limiting enzyme of the InsP6 pathway. Modifies TNF-alpha-induced apoptosis by interfering with the activation of TNFRSF1A-associated death domain. Plays an important role in MLKL-mediated necroptosis. Produces highly phosphorylated inositol phosphates such as inositolhexakisphosphate (InsP6) which bind to MLKL mediating the release of an N-terminal auto-inhibitory region leading to its activation. Essential for activated phospho-MLKL to oligomerize and localize to the cell membrane during necroptosis. The protein is Inositol-tetrakisphosphate 1-kinase of Homo sapiens (Human).